Reading from the N-terminus, the 473-residue chain is Glucose facilitated diffusion protein (473 aa).

The Cytoplasmic portion of the chain corresponds to 1-13 (MSSESSQGLVTRL). A helical transmembrane segment spans residues 14–34 (ALIAAIGGLLFGYDSAVIAAI). The Periplasmic portion of the chain corresponds to 35–59 (GTPVDIHFIAPRHLSATAAASLSGM). The chain crosses the membrane as a helical span at residues 60–80 (VVVAVLVGCVTGSLLSGWIGI). Residues 81–85 (RFGRR) are Cytoplasmic-facing. Residues 86–106 (GGLLMSSICFVAAGFGAALTE) traverse the membrane as a helical segment. The Periplasmic segment spans residues 107–112 (KLFGTG). Residues 113-133 (GSALQIFCFFRFLAGLGIGVV) traverse the membrane as a helical segment. At 134–158 (STLTPTYIAEIAPPDKRGQMVSGQQ) the chain is on the cytoplasmic side. The helical transmembrane segment at 159–179 (MAIVTGALTGYIFTWLLAHFG) threads the bilayer. At 180–187 (SIDWVNAS) the chain is on the periplasmic side. A helical membrane pass occupies residues 188-208 (GWCWSPASEGLIGIAFLLLLL). Topologically, residues 209–257 (TAPDTPHWLVMKGRHSEASKILARLEPQADPNLTIQKIKAGFDKAMDKS) are cytoplasmic. Residues 258–278 (SAGLFAFGITVVFAGVSVAAF) traverse the membrane as a helical segment. At 279 to 303 (QQLVGINAVLYYAPQMFQNLGFGAD) the chain is on the periplasmic side. Residues 304–324 (TALLQTISIGVVNFIFTMIAS) form a helical membrane-spanning segment. Residues 325–335 (RVVDRFGRKPL) are Cytoplasmic-facing. Residues 336-356 (LIWGALGMAAMMAVLGCCFWF) traverse the membrane as a helical segment. At 357-366 (KVGGVLPLAS) the chain is on the periplasmic side. A helical transmembrane segment spans residues 367–387 (VLLYIAVFGMSWGPVCWVVLS). The Cytoplasmic segment spans residues 388–396 (EMFPSSIKG). Residues 397–417 (AAMPIAVTGQWLANILVNFLF) form a helical membrane-spanning segment. The Periplasmic segment spans residues 418–429 (KVADGSPALNQT). Residues 430 to 450 (FNHGFSYLVFAALSILGGLIV) traverse the membrane as a helical segment. Residues 451 to 473 (ARFVPETKGRSLDEIEEMWRSQK) are Cytoplasmic-facing.

This sequence belongs to the major facilitator superfamily. Sugar transporter (TC 2.A.1.1) family.

It is found in the cell inner membrane. Functionally, allows uptake of glucose by the cell; allows growth on glucose minimal medium by E.coli cells impaired in glucose transport. Also transports fructose, but has a strong preference for glucose. The protein is Glucose facilitated diffusion protein of Zymomonas mobilis subsp. mobilis (strain ATCC 31821 / ZM4 / CP4).